A 220-amino-acid polypeptide reads, in one-letter code: Histone deacetylase complex subunit SAP30 (220 aa).

The interaction with NCOR1 stretch occupies residues 1-129 (MNGFTPDEMS…QSVRNRRKRK (129 aa)). Phosphothreonine is present on Thr-5. The Atypical zinc finger occupies 67–115 (CCLREDGERCGRAAGNASFSKRIQKSISQKKVKIELDKSARHLYICDYH). Lys-87 is covalently cross-linked (Glycyl lysine isopeptide (Lys-Gly) (interchain with G-Cter in SUMO2)). The tract at residues 123–143 (RNRRKRKGSDDDGGDSPVQDI) is disordered. The interaction with SIN3A stretch occupies residues 130–220 (GSDDDGGDSP…SDLKVDSGVH (91 aa)). Residues Ser-131 and Ser-138 each carry the phosphoserine modification. Position 145 is a phosphothreonine (Thr-145). Residues Lys-194, Lys-205, and Lys-214 each participate in a glycyl lysine isopeptide (Lys-Gly) (interchain with G-Cter in SUMO2) cross-link.

It belongs to the SAP30 family. As to quaternary structure, component of the histone deacetylase complex that includes at least SIN3A, HDAC1 and HDAC2. Found in a complex composed of at least SINHCAF, SIN3A, HDAC1, SAP30, RBBP4, OGT and TET1. Interacts with HDAC1. Interacts with SIN3A, SIN3B, HDAC2, RBBP4 and NCOR1. Interacts with SAMSN1. Interacts with HCFC1. Interacts with SAP30BP. In terms of tissue distribution, expressed in all tissues tested with highest levels in pancreas, ovary, PBL, spleen and thymus; lowest levels in brain, placenta, lung and kidney.

Its subcellular location is the nucleus. Its function is as follows. Involved in the functional recruitment of the Sin3-histone deacetylase complex (HDAC) to a specific subset of N-CoR corepressor complexes. Capable of transcription repression by N-CoR. Active in deacetylating core histone octamers (when in a complex) but inactive in deacetylating nucleosomal histones. Functionally, (Microbial infection) Involved in transcriptional repression of HHV-1 genes TK and gC. This is Histone deacetylase complex subunit SAP30 from Homo sapiens (Human).